Consider the following 79-residue polypeptide: Defensin-like protein 3 (79 aa).

The first 29 residues, 1-29 (MAKFASIVALLFAALVVFAAFEAPTVVEA), serve as a signal peptide directing secretion. Cystine bridges form between Cys-32–Cys-79, Cys-43–Cys-64, Cys-49–Cys-73, and Cys-53–Cys-75.

Belongs to the DEFL family.

The protein localises to the secreted. Possesses antifungal activity sensitive to inorganic cations. The protein is Defensin-like protein 3 (AFP3) of Raphanus sativus (Radish).